The following is an 805-amino-acid chain: RFX-like transcription factor daf-19 (805 aa).

A compositionally biased stretch (polar residues) spans Met1–Leu14. Positions Met1–Asp113 are disordered. Positions Lys19 to His92 are enriched in basic and acidic residues. The span at Asn93–Thr104 shows a compositional bias: polar residues. A DNA-binding region (RFX-type winged-helix) is located at residues Thr260–Asp334.

Belongs to the RFX family. In terms of tissue distribution, ciliated sensory neurons. Expressed in the male tail HOB and RnB neurons but not in male-specific CEM head neurons or other ciliated neurons.

The protein localises to the nucleus. In terms of biological role, probable transcription factor. May regulate some genes of ciliated sensory neurons. May activate the expression of the shared components of sensory cilia, but not the cell-type-specific expression. Together with transcription factor atf-7, involved in regulation of the serotonergic response of ADF neurons to pathogenic food. Involved in male mating behavior; may play a role in functional specialization of PKD ciliated sensory neurons. The sequence is that of RFX-like transcription factor daf-19 from Caenorhabditis elegans.